Consider the following 915-residue polypeptide: Coiled-coil domain-containing protein 57 (915 aa).

The interval 1–502 (MLPLGSEPAL…MHGLPRPGAQ (502 aa)) is centrosomal targeting domain. 4 coiled-coil regions span residues 92–173 (VSEL…QRQE), 214–422 (LEAL…LERD), 456–483 (KSQV…VTLE), and 521–548 (IQRL…LSHQ). 3 disordered regions span residues 555-574 (TAAE…GDAA), 606-653 (PLKM…QAGP), and 724-915 (QHGG…NIMD). A microtubule binding domain region spans residues 606 to 915 (PLKMSSPHAE…PKIRNYNIMD (310 aa)). The span at 613 to 627 (HAESQPSVRTSTETT) shows a compositional bias: polar residues. Over residues 628–652 (GGSAQAGQAGGSVQAGQAGGSVQAG) the composition is skewed to low complexity. Residues 745-758 (GREDAKSAEDEAPS) are compositionally biased toward basic and acidic residues. Composition is skewed to polar residues over residues 781 to 794 (PKTQ…TCKS), 819 to 830 (SHSSSSFASGTL), and 841 to 852 (SSPSGVTSQGDS). Low complexity predominate over residues 879 to 891 (KTAAQAKAKTTGA).

In terms of assembly, interacts with CEP63; the interaction is required for their location to proximal end of centrioles. Interacts with microtubules.

It localises to the cytoplasm. It is found in the cytoskeleton. Its subcellular location is the microtubule organizing center. The protein resides in the centrosome. The protein localises to the centriolar satellite. It localises to the centriole. It is found in the spindle. In terms of biological role, pleiotropic regulator of centriole duplication, mitosis, and ciliogenesis. Critical interface between centrosome and microtubule-mediated cellular processes. Centriole duplication protein required for recruitment of CEP63, CEP152, and PLK4 to the centrosome. Independent of its centrosomal targeting, localizes to and interacts with microtubules and regulates microtubule nucleation, stability, and mitotic progression. The sequence is that of Coiled-coil domain-containing protein 57 from Homo sapiens (Human).